The following is a 33-amino-acid chain: uncharacterized protein (33 aa).

The tract at residues 1–33 is disordered; that stretch reads MGSVIKKRRKRMSKKKHRKLLRRTRVQRRKLGK.

This is an uncharacterized protein from Mycobacterium tuberculosis (strain CDC 1551 / Oshkosh).